The following is a 687-amino-acid chain: DNA-directed RNA polymerase subunit beta' (687 aa).

Positions 69, 71, 87, and 90 each coordinate Zn(2+). Mg(2+)-binding residues include Asp492, Asp494, and Asp496.

The protein belongs to the RNA polymerase beta' chain family. RpoC1 subfamily. In terms of assembly, in plastids the minimal PEP RNA polymerase catalytic core is composed of four subunits: alpha, beta, beta', and beta''. When a (nuclear-encoded) sigma factor is associated with the core the holoenzyme is formed, which can initiate transcription. Mg(2+) is required as a cofactor. Requires Zn(2+) as cofactor.

Its subcellular location is the plastid. The protein localises to the chloroplast. It catalyses the reaction RNA(n) + a ribonucleoside 5'-triphosphate = RNA(n+1) + diphosphate. In terms of biological role, DNA-dependent RNA polymerase catalyzes the transcription of DNA into RNA using the four ribonucleoside triphosphates as substrates. This Silene latifolia (White campion) protein is DNA-directed RNA polymerase subunit beta'.